Reading from the N-terminus, the 68-residue chain is Peptide TsPep3 (68 aa).

Residues 1-26 (MKLSCGFLLIFLVLSAMIATFSEVEA) form the signal peptide. Intrachain disulfides connect C30-C38, C33-C54, C37-C47, and C42-C52. The propeptide occupies 56-68 (GRSDLNEEFENYQ).

In terms of tissue distribution, expressed by the venom gland.

It localises to the secreted. Functionally, probable weak potassium channel blocker. In Tityus serrulatus (Brazilian scorpion), this protein is Peptide TsPep3.